Here is a 300-residue protein sequence, read N- to C-terminus: 3-hydroxy-3-isohexenylglutaryl-CoA/hydroxy-methylglutaryl-CoA lyase (300 aa).

One can recognise a Pyruvate carboxyltransferase domain in the interval valine 7 to valine 274. Arginine 15 contributes to the substrate binding site. A divalent metal cation-binding residues include aspartate 16, histidine 207, and histidine 209. Cysteine 240 is a catalytic residue. Asparagine 249 is a binding site for a divalent metal cation.

This sequence belongs to the HMG-CoA lyase family. As to quaternary structure, homodimer. Mg(2+) serves as cofactor. Requires Mn(2+) as cofactor.

It carries out the reaction 3-hydroxy-3-(4-methylpent-3-en-1-yl)glutaryl-CoA = 7-methyl-3-oxooct-6-enoyl-CoA + acetate. It catalyses the reaction (3S)-3-hydroxy-3-methylglutaryl-CoA = acetoacetate + acetyl-CoA. The protein operates within metabolic intermediate metabolism; (S)-3-hydroxy-3-methylglutaryl-CoA degradation; acetoacetate from (S)-3-hydroxy-3-methylglutaryl-CoA: step 1/1. Functionally, involved in the L-leucine, isovalerate and acyclic monoterpene catabolism. Catalyzes the cleavage of 3-hydroxy-3-methylglutaryl-CoA (HMG-CoA) to yield acetyl-CoA and acetoacetate. It can also catalyze the cleavage of 3-hydroxy-3-isohexenylglutaryl-CoA (HIHG_CoA) to yield 7-methyl-3-oxooct-6-enoyl-CoA and acetate. This Pseudomonas aeruginosa (strain ATCC 15692 / DSM 22644 / CIP 104116 / JCM 14847 / LMG 12228 / 1C / PRS 101 / PAO1) protein is 3-hydroxy-3-isohexenylglutaryl-CoA/hydroxy-methylglutaryl-CoA lyase.